The sequence spans 203 residues: Small ribosomal subunit protein uS4 (203 aa).

Positions 93–156 (RRLDNVVYRL…AKVPAILEAV (64 aa)) constitute an S4 RNA-binding domain.

It belongs to the universal ribosomal protein uS4 family. Part of the 30S ribosomal subunit. Contacts protein S5. The interaction surface between S4 and S5 is involved in control of translational fidelity.

Its function is as follows. One of the primary rRNA binding proteins, it binds directly to 16S rRNA where it nucleates assembly of the body of the 30S subunit. Functionally, with S5 and S12 plays an important role in translational accuracy. The polypeptide is Small ribosomal subunit protein uS4 (Streptococcus thermophilus (strain CNRZ 1066)).